The sequence spans 135 residues: Protein PsiE homolog (135 aa).

The next 4 membrane-spanning stretches (helical) occupy residues 20-40 (VGLI…TIHL), 54-74 (YMLI…ALIV), 82-102 (HFPL…LIIV), and 107-127 (PIDT…LYLA).

This sequence belongs to the PsiE family.

Its subcellular location is the cell inner membrane. The chain is Protein PsiE homolog from Yersinia pseudotuberculosis serotype IB (strain PB1/+).